Reading from the N-terminus, the 404-residue chain is Cysteine desulfurase IscS (404 aa).

Pyridoxal 5'-phosphate is bound by residues 75 to 76 (AT), Asn155, Gln183, and 203 to 205 (SAH). The residue at position 206 (Lys206) is an N6-(pyridoxal phosphate)lysine. Thr243 is a binding site for pyridoxal 5'-phosphate. Residue Cys328 is the Cysteine persulfide intermediate of the active site. Cys328 is a [2Fe-2S] cluster binding site.

It belongs to the class-V pyridoxal-phosphate-dependent aminotransferase family. NifS/IscS subfamily. Homodimer. Forms a heterotetramer with IscU, interacts with other sulfur acceptors. Pyridoxal 5'-phosphate is required as a cofactor.

The protein localises to the cytoplasm. It carries out the reaction (sulfur carrier)-H + L-cysteine = (sulfur carrier)-SH + L-alanine. It functions in the pathway cofactor biosynthesis; iron-sulfur cluster biosynthesis. Master enzyme that delivers sulfur to a number of partners involved in Fe-S cluster assembly, tRNA modification or cofactor biosynthesis. Catalyzes the removal of elemental sulfur atoms from cysteine to produce alanine. Functions as a sulfur delivery protein for Fe-S cluster synthesis onto IscU, an Fe-S scaffold assembly protein, as well as other S acceptor proteins. The protein is Cysteine desulfurase IscS of Vibrio vulnificus (strain YJ016).